A 221-amino-acid polypeptide reads, in one-letter code: ATP synthase subunit a 1 (221 aa).

5 helical membrane passes run 20 to 40 (LTIVTTWALMLLLAGGSALIT), 78 to 98 (YLPFIAALFLFIATANLCTVI), 108 to 128 (LSTTAALALSVFIAVPLFGIA), 174 to 194 (MILVILLTISPLVFPVLMNIL), and 196 to 216 (LLTGMVQAYIFSILATVYIAA).

Belongs to the ATPase A chain family. As to quaternary structure, F-type ATPases have 2 components, CF(1) - the catalytic core - and CF(0) - the membrane proton channel. CF(1) has five subunits: alpha(3), beta(3), gamma(1), delta(1), epsilon(1). CF(0) has four main subunits: a, b, b' and c.

It localises to the cell inner membrane. In terms of biological role, key component of the proton channel; it plays a direct role in the translocation of protons across the membrane. In Chlorobaculum tepidum (strain ATCC 49652 / DSM 12025 / NBRC 103806 / TLS) (Chlorobium tepidum), this protein is ATP synthase subunit a 1.